A 397-amino-acid chain; its full sequence is RNA pseudouridine synthase 5 (397 aa).

An S4 RNA-binding domain is found at 64 to 114; that stretch reads APLPGWIKRIRDGQITVDGEVATDPDMILREGSKLVYHRLPWQEPFAPHLL.

This sequence belongs to the pseudouridine synthase RluA family.

It catalyses the reaction a uridine in RNA = a pseudouridine in RNA. This is RNA pseudouridine synthase 5 from Oryza sativa subsp. japonica (Rice).